The sequence spans 430 residues: Histidinol dehydrogenase (430 aa).

Residues tyrosine 130, glutamine 191, and asparagine 214 each coordinate NAD(+). Substrate contacts are provided by serine 237, glutamine 259, and histidine 262. The Zn(2+) site is built by glutamine 259 and histidine 262. Residues glutamate 327 and histidine 328 each act as proton acceptor in the active site. Residues histidine 328, aspartate 361, glutamate 415, and histidine 420 each coordinate substrate. Aspartate 361 is a binding site for Zn(2+). Histidine 420 is a Zn(2+) binding site.

The protein belongs to the histidinol dehydrogenase family. Zn(2+) is required as a cofactor.

The catalysed reaction is L-histidinol + 2 NAD(+) + H2O = L-histidine + 2 NADH + 3 H(+). The protein operates within amino-acid biosynthesis; L-histidine biosynthesis; L-histidine from 5-phospho-alpha-D-ribose 1-diphosphate: step 9/9. Functionally, catalyzes the sequential NAD-dependent oxidations of L-histidinol to L-histidinaldehyde and then to L-histidine. The polypeptide is Histidinol dehydrogenase (Brucella abortus (strain 2308)).